The chain runs to 322 residues: Putative MgpC-like protein MPN_367 (322 aa).

The segment covering M1–N48 has biased composition (low complexity). Disordered regions lie at residues M1–S59 and D118–L145. Residues T120–G134 are compositionally biased toward polar residues.

This sequence belongs to the MgpC family.

This is Putative MgpC-like protein MPN_367 from Mycoplasma pneumoniae (strain ATCC 29342 / M129 / Subtype 1) (Mycoplasmoides pneumoniae).